A 149-amino-acid chain; its full sequence is Calmodulin-1 (149 aa).

N-acetylalanine is present on alanine 2. EF-hand domains follow at residues 8-43 (EQIAEFKEAFSLFDKDGDGCITTKELGTVMRSLGQN), 44-79 (PTEAELQDMISEADADQNGTIDFPEFLNLMARKMKD), 81-116 (DSEEELKEAFKVFDKDQNGFISAAELRHVMTNLGEK), and 117-149 (LTDEEVDEMIREADIDGDGQVNYEEFVRMMLAK). Positions 21, 23, 25, 27, 32, 57, 59, 61, 63, 68, 94, 96, 98, and 105 each coordinate Ca(2+). Lysine 116 is modified (N6,N6,N6-trimethyllysine). Ca(2+) is bound by residues aspartate 130, aspartate 132, aspartate 134, glutamine 136, and glutamate 141.

Belongs to the calmodulin family. High expression in stolon tips and stems, moderate in roots, and very low in leaves. Localized in the meristematic regions of the shoot and root tips, the tip of the developing tuber and the vascular zones of petiole and tuber. Not detected in mesophyll cells.

Calmodulin mediates the control of a large number of enzymes, ion channels and other proteins by Ca(2+). Among the enzymes to be stimulated by the calmodulin-Ca(2+) complex are a number of protein kinases and phosphatases. In Solanum tuberosum (Potato), this protein is Calmodulin-1 (PCM1).